We begin with the raw amino-acid sequence, 805 residues long: Angiotensin-converting enzyme 2 (805 aa).

A signal peptide spans Met-1 to Ala-17. The Extracellular portion of the chain corresponds to Gln-18–Ser-740. The region spanning Ser-19 to Ser-607 is the Peptidase M2 domain. Residues Asp-30–Tyr-41 form an interaction with SARS-CoV spike glycoprotein region. Asn-53 is a glycosylation site (N-linked (GlcNAc...) asparagine). Residues Met-82–Pro-84 form an interaction with SARS-CoV spike glycoprotein region. 2 N-linked (GlcNAc...) asparagine glycosylation sites follow: Asn-90 and Asn-103. A disulfide bridge links Cys-133 with Cys-141. Residue Arg-169 coordinates chloride. Arg-273 lines the substrate pocket. Asn-322 carries N-linked (GlcNAc...) asparagine glycosylation. A disulfide bond links Cys-344 and Cys-361. His-345–Pro-346 is a binding site for substrate. Residues Lys-353–Arg-357 are interaction with SARS-CoV spike glycoprotein. Position 374 (His-374) interacts with Zn(2+). Residue Glu-375 is the Proton acceptor of the active site. 2 residues coordinate Zn(2+): His-378 and Glu-402. The N-linked (GlcNAc...) asparagine glycan is linked to Asn-432. Residues Trp-477 and Lys-481 each coordinate chloride. Residue His-505 is the Proton donor of the active site. Substrate is bound at residue Tyr-515. A disulfide bridge connects residues Cys-530 and Cys-542. A glycan (N-linked (GlcNAc...) asparagine) is linked at Asn-546. Residues Ala-614 to Phe-805 form the Collectrin-like domain. The segment at Arg-652–Lys-659 is essential for cleavage by ADAM17. Asn-690 is a glycosylation site (N-linked (GlcNAc...) asparagine). The segment at Arg-697–Arg-716 is essential for cleavage by TMPRSS11D and TMPRSS2. Residues Ile-741–Ile-761 form a helical membrane-spanning segment. Residues Phe-762–Phe-805 are Cytoplasmic-facing. Positions Asn-772 to Phe-805 are disordered. The LIR motif lies at Glu-778–Ile-786. Residue Tyr-781 is modified to Phosphotyrosine. The short motif at Tyr-781 to Ile-784 is the Endocytic sorting signal element. The SH2-binding signature appears at Tyr-781–Asp-785. Residue Ser-783 is modified to Phosphoserine. A Glycyl lysine isopeptide (Lys-Gly) (interchain with G-Cter in ubiquitin) cross-link involves residue Lys-788. Residues Gly-789–Phe-805 show a composition bias toward polar residues. Residues Asn-792–Phe-795 carry the PTB motif. Positions Thr-803–Phe-805 match the PDZ-binding motif.

It belongs to the peptidase M2 family. As to quaternary structure, homodimer. Interacts with the catalytically active form of TMPRSS2. Interacts with SLC6A19; this interaction is essential for expression and function of SLC6A19 in intestine. Interacts with ITGA5:ITGB1. Probably interacts (via endocytic sorting signal motif) with AP2M1; the interaction is inhibited by phosphorylation of Tyr-781. Interacts (via PDZ-binding motif) with NHERF1 (via PDZ domains); the interaction may enhance ACE2 membrane residence. In terms of assembly, (Microbial infection) Interacts with SARS coronavirus/SARS-CoV spike protein. (Microbial infection) Interacts with SARS coronavirus-2/SARS-CoV-2 spike protein (via RBD domain). As to quaternary structure, (Microbial infection) Interacts with human coronavirus NL63 spike protein. In terms of assembly, (Microbial infection) Interacts with human coronavirus NL63/HCoV-NL63 spike glycoprotein. (Microbial infection) Interacts with SARS coronavirus-2/SARS-CoV-2 spike protein; the interaction is increased by AVP/Arg-vasopressin with which they may form a complex. Requires Zn(2+) as cofactor. The cofactor is chloride. In terms of processing, N-glycosylation on Asn-90 may limit SARS infectivity. Post-translationally, proteolytic cleavage by ADAM17 generates a secreted form. Also cleaved by serine proteases: TMPRSS2, TMPRSS11D and HPN/TMPRSS1. Phosphorylated. Phosphorylation at Tyr-781 probably inhibits interaction with AP2M1 and enables interactions with proteins containing SH2 domains. In terms of processing, ubiquitinated. Ubiquitinated on Lys-788 via 'Lys-48'-linked ubiquitin. 'Lys-48'-linked deubiquitinated by USP50 on the Lys-788; leading to its stabilization. In terms of tissue distribution, expressed in endothelial cells from small and large arteries, and in arterial smooth muscle cells (at protein level). Expressed in enterocytes of the small intestine, Leydig cells and Sertoli cells (at protein level). Expressed in the renal proximal tubule and the small intestine (at protein level). Expressed in heart, kidney, testis, and gastrointestinal system (at protein level). In lung, expressed at low levels in some alveolar type 2 cells, the expression seems to be individual-specific (at protein level). Expressed in nasal epithelial cells (at protein level). Coexpressed with TMPRSS2 within some lung alveolar type 2 cells, ileal absorptive enterocytes, intestinal epithelial cells, cornea, gallbladder and nasal goblet secretory cells. Coexpressed with TMPRSS4 within mature enterocytes. Expressed in nasal and bronchial epithelial cells (at protein level).

It localises to the secreted. It is found in the cell membrane. The protein resides in the cytoplasm. Its subcellular location is the cell projection. The protein localises to the cilium. It localises to the apical cell membrane. The enzyme catalyses angiotensin II + H2O = angiotensin-(1-7) + L-phenylalanine. It catalyses the reaction angiotensin I + H2O = angiotensin-(1-9) + L-leucine. It carries out the reaction bradykinin(1-8) + H2O = bradykinin(1-7) + L-phenylalanine. The catalysed reaction is neurotensin + H2O = neurotensin-(1-12) + L-leucine. The enzyme catalyses neurotensin-(1-8) + H2O = neurotensin-(1-7) + L-arginine. It catalyses the reaction kinetensin + H2O = kinetensin-(1-8) + L-leucine. It carries out the reaction dynorphin A-(1-13) + H2O = dynorphin A-(1-12) + L-lysine. The catalysed reaction is apelin-13 + H2O = apelin-12 + L-phenylalanine. The enzyme catalyses [Pyr1]apelin-13 + H2O = [Pyr1]apelin-12 + L-phenylalanine. It catalyses the reaction apelin-17 + H2O = apelin-16 + L-phenylalanine. It carries out the reaction beta-casomorphin-7 + H2O = beta-casomorphin-6 + L-isoleucine. The catalysed reaction is neocasomorphin + H2O = neocasomorphin-(1-5) + L-isoleucine. With respect to regulation, regulated by chloride and fluoride, but not bromide. Chloride increases angiotensin I and decreases angiotensin II cleavage. Inhibited by MLN-4760, cFP_Leu, and EDTA, but not by the ACE inhibitors lisinopril, captopril and enalaprilat. Highly potent and selective in vitro ACE2 inhibitors were identified. Functionally, essential counter-regulatory carboxypeptidase of the renin-angiotensin hormone system that is a critical regulator of blood volume, systemic vascular resistance, and thus cardiovascular homeostasis. Converts angiotensin I to angiotensin 1-9, a nine-amino acid peptide with anti-hypertrophic effects in cardiomyocytes, and angiotensin II to angiotensin 1-7, which then acts as a beneficial vasodilator and anti-proliferation agent, counterbalancing the actions of the vasoconstrictor angiotensin II. Also removes the C-terminal residue from three other vasoactive peptides, neurotensin, kinetensin, and des-Arg bradykinin, but is not active on bradykinin. Also cleaves other biological peptides, such as apelins (apelin-13, [Pyr1]apelin-13, apelin-17, apelin-36), casomorphins (beta-casomorphin-7, neocasomorphin) and dynorphin A with high efficiency. In addition, ACE2 C-terminus is homologous to collectrin and is responsible for the trafficking of the neutral amino acid transporter SL6A19 to the plasma membrane of gut epithelial cells via direct interaction, regulating its expression on the cell surface and its catalytic activity. In terms of biological role, (Microbial infection) Acts as a receptor for human coronaviruses SARS-CoV and SARS-CoV-2, as well as human coronavirus NL63/HCoV-NL63. Non-functional as a carboxypeptidase. Its function is as follows. (Microbial infection) Non-functional as a receptor for human coronavirus SARS-CoV-2. This is Angiotensin-converting enzyme 2 from Homo sapiens (Human).